A 377-amino-acid chain; its full sequence is Secreted LysM effector Lys2 (377 aa).

Residues 1–22 form the signal peptide; sequence MVRQSIGLIALQLLNLVSVAQA. Residues 104 to 119 show a composition bias toward low complexity; sequence TSSSTATTTSQKPTAT. Residues 104 to 124 form a disordered region; it reads TSSSTATTTSQKPTATVSPLP. LysM domains follow at residues 135–182 and 207–253; these read KYYN…YVCV and KYYK…YYCV.

This sequence belongs to the secreted LysM effector family.

Its function is as follows. Might have a role in sequestration of chitin oligosaccharides (breakdown products of fungal cell walls that are released during invasion and act as triggers of host immunity) to dampen host defense. This chain is Secreted LysM effector Lys2, found in Pochonia chlamydosporia (strain 123) (Metacordyceps chlamydosporia).